The primary structure comprises 77 residues: Acyl carrier protein (77 aa).

One can recognise a Carrier domain in the interval 2–77 (STVEERVKKI…DAIDYILANQ (76 aa)). Ser-37 carries the O-(pantetheine 4'-phosphoryl)serine modification.

It belongs to the acyl carrier protein (ACP) family. Post-translationally, 4'-phosphopantetheine is transferred from CoA to a specific serine of apo-ACP by AcpS. This modification is essential for activity because fatty acids are bound in thioester linkage to the sulfhydryl of the prosthetic group.

The protein localises to the cytoplasm. The protein operates within lipid metabolism; fatty acid biosynthesis. In terms of biological role, carrier of the growing fatty acid chain in fatty acid biosynthesis. The sequence is that of Acyl carrier protein from Hahella chejuensis (strain KCTC 2396).